A 682-amino-acid chain; its full sequence is Penicillin-binding protein activator LpoA (682 aa).

An N-terminal signal peptide occupies residues 1 to 26; that stretch reads MLSSITVRTKSGRLIPLVLAATLLAA. Cys-27 is lipidated: N-palmitoyl cysteine. Residue Cys-27 is the site of S-diacylglycerol cysteine attachment.

This sequence belongs to the LpoA family. In terms of assembly, interacts with PBP1a.

It is found in the cell outer membrane. In terms of biological role, regulator of peptidoglycan synthesis that is essential for the function of penicillin-binding protein 1A (PBP1a). In Edwardsiella ictaluri (strain 93-146), this protein is Penicillin-binding protein activator LpoA.